The sequence spans 307 residues: Alpha N-terminal protein methyltransferase 1 (307 aa).

The segment covering 38–51 (EPAPAPAAGSNGVA) has biased composition (low complexity). The disordered stretch occupies residues 38 to 60 (EPAPAPAAGSNGVAGEEEAGGGG). Residues G123, R128, 145 to 147 (EPV), 179 to 180 (LQ), and Q195 each bind S-adenosyl-L-methionine.

This sequence belongs to the methyltransferase superfamily. NTM1 family.

It carries out the reaction N-terminal L-alanyl-L-prolyl-L-lysyl-[protein] + 3 S-adenosyl-L-methionine = N-terminal N,N,N-trimethyl-L-alanyl-L-prolyl-L-lysyl-[protein] + 3 S-adenosyl-L-homocysteine + 3 H(+). It catalyses the reaction N-terminal L-seryl-L-prolyl-L-lysyl-[protein] + 3 S-adenosyl-L-methionine = N-terminal N,N,N-trimethyl-L-seryl-L-prolyl-L-lysyl-[protein] + 3 S-adenosyl-L-homocysteine + 3 H(+). The catalysed reaction is N-terminal L-prolyl-L-prolyl-L-lysyl-[protein] + 2 S-adenosyl-L-methionine = N-terminal N,N-dimethyl-L-prolyl-L-prolyl-L-lysyl-[protein] + 2 S-adenosyl-L-homocysteine + 2 H(+). Its function is as follows. Alpha-N-methyltransferase that methylates the N-terminus of target proteins containing the N-terminal motif [Ala/Pro/Ser]-Pro-Lys when the initiator Met is cleaved. Specifically catalyzes mono-, di- or tri-methylation of exposed alpha-amino group of Ala or Ser residue in the [Ala/Ser]-Pro-Lys motif and mono- or di-methylation of Pro in the Pro-Pro-Lys motif. The chain is Alpha N-terminal protein methyltransferase 1 from Oryza sativa subsp. japonica (Rice).